The following is a 360-amino-acid chain: Peptide chain release factor 1 (360 aa).

Gln237 carries the N5-methylglutamine modification.

The protein belongs to the prokaryotic/mitochondrial release factor family. Methylated by PrmC. Methylation increases the termination efficiency of RF1.

The protein localises to the cytoplasm. In terms of biological role, peptide chain release factor 1 directs the termination of translation in response to the peptide chain termination codons UAG and UAA. The polypeptide is Peptide chain release factor 1 (Pseudomonas savastanoi pv. phaseolicola (strain 1448A / Race 6) (Pseudomonas syringae pv. phaseolicola (strain 1448A / Race 6))).